Reading from the N-terminus, the 375-residue chain is MEKKSVPNSDKLSLIRVLRGIICLMVLVSTAFMMLIFWGFLSAVVLRLFSIRYSRKCVSFFFGSWLALWPFLFEKINKTKVIFSGDKVPCEDRVLLIANHRTEVDWMYFWDLALRKGQIGNIKYVLKSSLMKLPLFGWAFHLFEFIPVERRWEVDEANLRQIVSSFKDPRDALWLALFPEGTDYTEAKCQRSKKFAAENGLPILNNVLLPRTKGFVSCLQELSCSLDAVYDVTIGYKTRCPSFLDNVYGIEPSEVHIHIRRINLTQIPNQEKDINAWLMNTFQLKDQLLNDFYSNGHFPNEGTEKEFNTKKYLINCLAVIAFTTICTHLTFFSSMIWFRIYVSLACVYLTSATHFNLRSVPLVETAKNSLKLVNK.

2 helical membrane-spanning segments follow: residues 21 to 41 and 57 to 77; these read IICL…WGFL and CVSF…EKIN. The short motif at 100–105 is the HXXXXD motif element; the sequence is HRTEVD. A run of 2 helical transmembrane segments spans residues 312–332 and 337–357; these read YLIN…LTFF and WFRI…HFNL.

It belongs to the 1-acyl-sn-glycerol-3-phosphate acyltransferase family. As to expression, widely expressed at low level.

It localises to the membrane. The enzyme catalyses a 1-acyl-sn-glycero-3-phosphate + an acyl-CoA = a 1,2-diacyl-sn-glycero-3-phosphate + CoA. The protein operates within phospholipid metabolism; CDP-diacylglycerol biosynthesis; CDP-diacylglycerol from sn-glycerol 3-phosphate: step 2/3. Functionally, may convert lysophosphatidic acid (LPA) into phosphatidic acid by incorporating acyl moiety at the 2 position. Has no activity when expressed in bacteria or yeast. The polypeptide is Probable 1-acyl-sn-glycerol-3-phosphate acyltransferase 5 (LPAT5) (Arabidopsis thaliana (Mouse-ear cress)).